Consider the following 684-residue polypeptide: Pentatricopeptide repeat-containing protein At4g14850 (684 aa).

14 PPR repeats span residues 5–39 (SADALGLLLKNAISASSMRLGRVVHARIVKTLDSP), 41–71 (PPFLANYLINMYSKLDHPESARLVLRLTPAR), 72–106 (NVVSWTSLISGLAQNGHFSTALVEFFEMRREGVVP), 107–141 (NDFTFPCAFKAVASLRLPVTGKQIHALAVKCGRIL), 142–172 (DVFVGCSAFDMYCKTRLRDDARKLFDEIPER), 173–207 (NLETWNAFISNSVTDGRPREAIEAFIEFRRIDGHP), 208–242 (NSITFCAFLNACSDWLHLNLGMQLHGLVLRSGFDT), 243–277 (DVSVCNGLIDFYGKCKQIRSSEIIFTEMGTKNAVS), 278–308 (WCSLVAAYVQNHEDEKASVLYLRSRKDIVET), 309–343 (SDFMISSVLSACAGMAGLELGRSIHAHAVKACVER), 344–374 (TIFVGSALVDMYGKCGCIEDSEQAFDEMPEK), 375–409 (NLVTRNSLIGGYAHQGQVDMALALFEEMAPRGCGP), 412–442 (NYMTFVSLLSACSRAGAVENGMKIFDSMRST), and 448–478 (GAEHYSCIVDMLGRAGMVERAYEFIKKMPIQ). The interval 483-558 (VWGALQNACR…GAGYSWITVK (76 aa)) is type E motif; degenerate. Residues 559–589 (NQVHAFQAKDRSHILNKEIQTTLAKLRNEME) form a type E(+) motif; degenerate region. The segment at 590–684 (AAGYKPDLKL…DGICSCKDYW (95 aa)) is type DYW motif.

Belongs to the PPR family. PCMP-H subfamily.

Acts as a regulatory factor of isoprenoid biosynthesis. Could bind RNA. This chain is Pentatricopeptide repeat-containing protein At4g14850 (LOI1), found in Arabidopsis thaliana (Mouse-ear cress).